The chain runs to 476 residues: MSTRNVMITDLDQPDPNQQQHHQNPKKNRKVLQTLSGNFNRRSRSVEVEVKRQDNLGVVHKDRKKDRSFNSLLQAKDQQLEQLVQRLATLHRYNDQFAKENDQLRKDSGQLERRLTEAEQQVANCSRCQQLGQRLDTVLAQNRTLAGDVDMLKTLVFRLNVQIESYQDQRRLGEGAPTCGGSTKVSSSSAPYPPLPTHTLGPLLQAYDESLRDKDALLAQYNTEFEHFTGELKRALEENTKLLQSQEQLRRDLGGWREERVCLQAQLGVCRSKAEAQTRKTDLAKEKLVEVMHCYEQRMQTLILDMDHLQAAYARTKSELAALKSASSAAPAAVAPPVPAESEALHQCKALLEQLRQEHARERTCLQEQLQATTARAASLVRSTEKAKHSRDRLKARLRMALQWAQKLEAGQAEVRDTYEAVRRLEVLVQHKESQLRGLHARNAEEMDKLRHKLQQKEETICALLRGKMERRPAVD.

Disordered regions lie at residues Met1–Arg29 and Leu172–Pro193. Residues Gly180 to Ala190 show a composition bias toward polar residues.

It localises to the cytoplasm. The protein localises to the cytosol. It is found in the mitochondrion intermembrane space. Required for mitochondrial complex IV activity. May be involved in non-associative learning. This chain is Protein Cep89 homolog (Cep89), found in Drosophila melanogaster (Fruit fly).